The chain runs to 424 residues: Histidine--tRNA ligase (424 aa).

Belongs to the class-II aminoacyl-tRNA synthetase family. Homodimer.

It is found in the cytoplasm. The enzyme catalyses tRNA(His) + L-histidine + ATP = L-histidyl-tRNA(His) + AMP + diphosphate + H(+). The protein is Histidine--tRNA ligase of Shewanella woodyi (strain ATCC 51908 / MS32).